A 218-amino-acid chain; its full sequence is Oxaloacetate decarboxylase, mitochondrial (218 aa).

Residues 1 to 18 (MNKFWETGRKIVAVGRNY) constitute a mitochondrion transit peptide. The Mg(2+) site is built by Glu-63, Glu-65, and Asp-94.

It belongs to the FAH family. In terms of assembly, homodimer. Requires Mg(2+) as cofactor. It depends on Mn(2+) as a cofactor.

The protein localises to the mitochondrion. It localises to the cytoplasm. It is found in the cytosol. The enzyme catalyses a 3-acylpyruvate + H2O = a carboxylate + pyruvate + H(+). It carries out the reaction acetylpyruvate + H2O = acetate + pyruvate + H(+). The catalysed reaction is 3-fumarylpyruvate + H2O = fumarate + pyruvate + H(+). It catalyses the reaction oxaloacetate + H(+) = pyruvate + CO2. Functionally, mitochondrial protein that acts as an oxaloacetate decarboxylase (ODx), catalyzing the decarboxylation of oxaloacetate (OAA) to pyruvate and CO(2), and as such is likely a regulatory enzyme in the TCA cycle. Also displays acylpyruvase activity, being able to hydrolyze acetylpyruvate and fumarylpyruvate in vitro. This is Oxaloacetate decarboxylase, mitochondrial (fahd1) from Dictyostelium discoideum (Social amoeba).